Here is a 635-residue protein sequence, read N- to C-terminus: Chaperone protein HtpG (635 aa).

The segment at 1 to 346 is a; substrate-binding; it reads MSQTTTNSAS…SADLPLNVSR (346 aa). The segment at 347 to 563 is b; the sequence is EILQESRDVR…QNELSPHLLR (217 aa). Residues 564 to 635 form a c region; sequence MLKAAGQEAP…KRLNGLLLKA (72 aa).

The protein belongs to the heat shock protein 90 family. As to quaternary structure, homodimer.

The protein localises to the cytoplasm. Molecular chaperone. Has ATPase activity. This Bordetella parapertussis (strain 12822 / ATCC BAA-587 / NCTC 13253) protein is Chaperone protein HtpG.